The primary structure comprises 605 residues: Cystathionine gamma-synthase-like enzyme iboG1 (605 aa).

Tyr-289 contributes to the substrate binding site. Lys-393 carries the N6-(pyridoxal phosphate)lysine modification.

This sequence belongs to the trans-sulfuration enzymes family. Pyridoxal 5'-phosphate is required as a cofactor.

It participates in secondary metabolite biosynthesis. Functionally, cystathionine gamma-synthase-like enzyme; part of the gene cluster that mediates the biosynthesis of the psychoactive metabolites ibotenic acid and muscimol. The first committed step is glutamate hydroxylation by the 2-oxoglutarate-dependent dioxygenase iboH, and the last step is decarboxylation of ibotenic acid to muscimol by the decarboxylase iboD. The order of the intermediate reactions is somewhat ambiguous. IboA likely activates the carboxylic acid at position 5 to introduce an amide bond, and the flavin monooxygenase iboF generates the N-O bond. There are several options for the latter step. One option is that iboF directly hydroxylates the amide nitrogen formed by iboA to produce a hydroxamic acid species. Another option is that iboF hydroxylates an external N-containing compound, whose resulting N-O bond is subsequently introduced into the hydroxyglutamate scaffold. The paralogous PLP-dependent cystathionine gamma-synthase-like enzymes iboG1 and iboG2 are likely involved in substitution of the OH group at position 3 by the O-N moiety. The first cyclic intermediate is most probably tricholomic acid which is likely desaturated to ibotenic acid by the cytochrome P450 monooxygenase iboC. This chain is Cystathionine gamma-synthase-like enzyme iboG1 (iboG1), found in Amanita muscaria (strain Koide BX008).